Here is a 555-residue protein sequence, read N- to C-terminus: Cinnamate beta-D-glucosyltransferase (555 aa).

His19 serves as the catalytic Proton acceptor. An an anthocyanidin-binding site is contributed by His19. 6 residues coordinate UDP-alpha-D-glucose: Gln344, His359, Trp362, Asn363, Ser364, and Glu367. An anthocyanidin is bound at residue Gly382. 2 residues coordinate UDP-alpha-D-glucose: Asp383 and Gln384.

This sequence belongs to the UDP-glycosyltransferase family. Highest expression detected in fruit, with lower levels detected in flower and petiole. Barely detectable in leaf and root.

The enzyme catalyses (E)-cinnamate + UDP-alpha-D-glucose = 1-O-(trans-cinnamoyl)-beta-D-glucose + UDP. In terms of biological role, broad spectrum multifunctional glucosyltransferase. Catalyzes the formation of cinnamic acid and p-coumaric acid glucose esters during fruit ripening. Accepted substrates range from derivatives of cinnamic acid and benzoic acid to heterocyclic and aliphatic compounds, resulting in the formation of O- and S-glucose esters and O-glucosides. May also be involved in detoxification of xenobiotics. This chain is Cinnamate beta-D-glucosyltransferase, found in Fragaria ananassa (Strawberry).